The following is a 630-amino-acid chain: Pro-interleukin-16 (630 aa).

Disordered stretches follow at residues glutamate 30 to threonine 268 and proline 316 to threonine 343. Residues isoleucine 129–serine 143 are compositionally biased toward low complexity. Serine 220 is modified (phosphoserine). A compositionally biased stretch (polar residues) spans serine 321–threonine 343. The interval lysine 404–serine 500 is interaction with PPP1R12A, PPP1R12B and PPP1R12C. 2 PDZ domains span residues histidine 410–lysine 495 and threonine 532–lysine 617.

In terms of assembly, homotetramer. Pro-interleukin-16 interacts (via PDZ 2 domain) with PPP1R12A, PPP1R12B and PPP1R12C. Pro-interleukin-16 interacts with GRIN2A. Pro-interleukin-16 interacts with GABPB1. Pro-interleukin-16 interacts (via PDZ 3 domain) with HDAC3.

Its subcellular location is the secreted. The protein resides in the cytoplasm. It localises to the nucleus. Interleukin-16 stimulates a migratory response in CD4+ lymphocytes, monocytes, and eosinophils. Primes CD4+ T-cells for IL-2 and IL-15 responsiveness. Also induces T-lymphocyte expression of interleukin 2 receptor. Ligand for CD4. Its function is as follows. Pro-interleukin-16 is involved in cell cycle progression in T-cells. Appears to be involved in transcriptional regulation of SKP2 and is probably part of a transcriptional repression complex on the core promoter of the SKP2 gene. May act as a scaffold for GABPB1 (the DNA-binding subunit the GABP transcription factor complex) and HDAC3 thus maintaining transcriptional repression and blocking cell cycle progression in resting T-cells. In Macaca mulatta (Rhesus macaque), this protein is Pro-interleukin-16 (IL16).